Reading from the N-terminus, the 2275-residue chain is Multifunctional protein pyrABCN (2275 aa).

The GATase (Glutamine amidotransferase) stretch occupies residues 1-440 (MPETVGHEEP…PGPRDTEYLF (440 aa)). Residues Ser-102, Gly-313, and Gly-315 each coordinate L-glutamine. Positions 265–453 (RVLCLDVGLK…INAIKDTIAS (189 aa)) constitute a Glutamine amidotransferase type-1 domain. Catalysis depends on Cys-342, which acts as the Nucleophile; for GATase activity. The L-glutamine site is built by Leu-343, Gln-346, Asn-384, Gly-386, and Tyr-387. Active-site for GATase activity residues include His-426 and Glu-428. Positions 441–482 (DVFINAIKDTIASPEALQKPVNFPGGAVAENIKASPRVSVKK) are linker. The tract at residues 483–1522 (VLILGSGGLS…TNVKNAKILI (1040 aa)) is CPSase (Carbamoyl-phosphate synthase). ATP-binding residues include Arg-600, Arg-640, Gly-646, Gly-647, Arg-677, Met-679, Glu-684, Gly-710, Ile-711, His-712, Gln-753, and Glu-767. ATP-grasp domains are found at residues 604–796 (ARSM…KLGL) and 1139–1330 (SRML…KAMI). Mg(2+) contacts are provided by Gln-753, Glu-767, and Asn-769. Gln-753, Glu-767, and Asn-769 together coordinate Mn(2+). ATP contacts are provided by Arg-1175, Lys-1214, Ile-1216, Glu-1221, Gly-1246, Val-1247, His-1248, Ser-1249, Gln-1289, and Glu-1301. 3 residues coordinate Mg(2+): Gln-1289, Glu-1301, and Asn-1303. Gln-1289, Glu-1301, and Asn-1303 together coordinate Mn(2+). Residues 1396 to 1575 (FKLPKRNILL…KDFEAVTKAS (180 aa)) enclose the MGS-like domain. The interval 1523–1532 (EAIARHYALN) is linker. Residues 1533 to 1862 (VQTIDYQTSH…FQGKTSCLDS (330 aa)) form a defective DHOase domain region. The interval 1863–1882 (EITPDAPKGSDMSGHRIVPA) is disordered. Positions 1863 to 1953 (EITPDAPKGS…LQMLSRSPFK (91 aa)) are linker. The ATCase (Aspartate transcarbamylase) stretch occupies residues 1954–2258 (QKHVLSVNQF…EFDMLMWMQM (305 aa)). Carbamoyl phosphate is bound by residues Arg-2006 and Thr-2007. Residue Lys-2034 participates in L-aspartate binding. 3 residues coordinate carbamoyl phosphate: Arg-2055, His-2083, and Gln-2086. Arg-2116 and Arg-2178 together coordinate L-aspartate. Carbamoyl phosphate is bound by residues Leu-2217 and Pro-2218.

It in the central section; belongs to the metallo-dependent hydrolases superfamily. DHOase family. CAD subfamily. The protein in the N-terminal section; belongs to the CarA family. In the 2nd section; belongs to the CarB family. This sequence in the 3rd section; belongs to the metallo-dependent hydrolases superfamily. DHOase family. CAD subfamily. It in the C-terminal section; belongs to the aspartate/ornithine carbamoyltransferase superfamily. ATCase family. It depends on Mg(2+) as a cofactor. Mn(2+) serves as cofactor.

It carries out the reaction hydrogencarbonate + L-glutamine + 2 ATP + H2O = carbamoyl phosphate + L-glutamate + 2 ADP + phosphate + 2 H(+). The catalysed reaction is L-glutamine + H2O = L-glutamate + NH4(+). It catalyses the reaction hydrogencarbonate + NH4(+) + 2 ATP = carbamoyl phosphate + 2 ADP + phosphate + 2 H(+). The enzyme catalyses carbamoyl phosphate + L-aspartate = N-carbamoyl-L-aspartate + phosphate + H(+). The protein operates within pyrimidine metabolism; UMP biosynthesis via de novo pathway; (S)-dihydroorotate from bicarbonate: step 1/3. It participates in pyrimidine metabolism; UMP biosynthesis via de novo pathway; (S)-dihydroorotate from bicarbonate: step 2/3. Functionally, multifunctional protein that encodes the first 2 enzymatic activities of the de novo pyrimidine pathway: carbamoylphosphate synthetase (CPSase; EC 6.3.5.5) and aspartate transcarbamylase (ATCase; EC 2.1.3.2). The CPSase-function is accomplished in 2 steps, by a glutamine-dependent amidotransferase activity (GATase) that binds and cleaves glutamine to produce ammonia, followed by an ammonium-dependent carbamoyl phosphate synthetase, which reacts with the ammonia, hydrogencarbonate and ATP to form carbamoyl phosphate. The endogenously produced carbamoyl phosphate is sequestered and channeled to the ATCase active site. ATCase then catalyzes the formation of carbamoyl-L-aspartate from L-aspartate and carbamoyl phosphate. The chain is Multifunctional protein pyrABCN from Emericella nidulans (strain FGSC A4 / ATCC 38163 / CBS 112.46 / NRRL 194 / M139) (Aspergillus nidulans).